Consider the following 454-residue polypeptide: N-acetyl-S-(2-succino)cysteine lyase (454 aa).

106–107 is a binding site for fumarate; the sequence is TT. His154 acts as the Proton donor/acceptor in catalysis. Fumarate is bound at residue Arg233. The Proton donor/acceptor role is filled by Ser277. Residues Thr278 and 283–285 contribute to the fumarate site; that span reads KRN.

This sequence belongs to the lyase 1 family.

The catalysed reaction is N-acetyl-S-(2-succino)-L-cysteine = N-acetyl-L-cysteine + fumarate. It functions in the pathway amino-acid biosynthesis; L-cysteine biosynthesis. Functionally, catalyzes the cleavage of N-acetyl-S-(2-succino)cysteine into fumarate and N-acetylcysteine. Is involved in a S-(2-succino)cysteine (2SC) degradation pathway that allows the bacterium to recover cysteine from 2SC and to detoxify 2SC that may be a toxic metabolite. Can also perform the reverse reaction in vitro, and has minor activity against 2SC and other small molecule thiols. The protein is N-acetyl-S-(2-succino)cysteine lyase of Dickeya dadantii (strain 3937) (Erwinia chrysanthemi (strain 3937)).